Consider the following 229-residue polypeptide: Prolactin (229 aa).

The first 30 residues, 1-30, serve as a signal peptide directing secretion; it reads MDKKGWSLKGSLLPLLLLVSDLLLCQSVAS. C34 and C41 are oxidised to a cystine. 3 positions are modified to phosphoserine: S56, S64, and S120. 2 disulfide bridges follow: C88-C204 and C221-C229.

Belongs to the somatotropin/prolactin family. As to quaternary structure, interacts with PRLR.

The protein localises to the secreted. Prolactin acts primarily on the mammary gland by promoting lactation. The protein is Prolactin (PRL) of Ailuropoda melanoleuca (Giant panda).